A 324-amino-acid polypeptide reads, in one-letter code: Glyoxylate/hydroxypyruvate reductase B (324 aa).

Catalysis depends on residues arginine 237 and glutamate 266. Histidine 285 (proton donor) is an active-site residue.

This sequence belongs to the D-isomer specific 2-hydroxyacid dehydrogenase family. GhrB subfamily. In terms of assembly, homodimer.

The protein resides in the cytoplasm. It carries out the reaction glycolate + NADP(+) = glyoxylate + NADPH + H(+). It catalyses the reaction (R)-glycerate + NAD(+) = 3-hydroxypyruvate + NADH + H(+). The enzyme catalyses (R)-glycerate + NADP(+) = 3-hydroxypyruvate + NADPH + H(+). Its function is as follows. Catalyzes the NADPH-dependent reduction of glyoxylate and hydroxypyruvate into glycolate and glycerate, respectively. This Salmonella paratyphi A (strain ATCC 9150 / SARB42) protein is Glyoxylate/hydroxypyruvate reductase B.